The sequence spans 100 residues: Small ribosomal subunit protein uS14c (100 aa).

Belongs to the universal ribosomal protein uS14 family. Part of the 30S ribosomal subunit.

Its subcellular location is the plastid. It is found in the chloroplast. Functionally, binds 16S rRNA, required for the assembly of 30S particles. The polypeptide is Small ribosomal subunit protein uS14c (Olimarabidopsis pumila (Dwarf rocket)).